The chain runs to 104 residues: Transcription factor ILI1 (104 aa).

A compositionally biased stretch (basic residues) spans 1–11 (MSSSRRSRSRR). The interval 1-27 (MSSSRRSRSRRAGSSVPSSSSSSRTSI) is disordered. Over residues 12–27 (AGSSVPSSSSSSRTSI) the composition is skewed to low complexity. The 56-residue stretch at 16–71 (VPSSSSSSRTSISEDQIAELLSKLQALLPESQARNGAHRGSAARVLQETCSYIRSL) folds into the bHLH domain.

This sequence belongs to the bHLH protein family. Interacts with IBH1.

In terms of biological role, atypical and probable non DNA-binding bHLH transcription factor that acts as a positive regulator of cell elongation and plant development. Binds the transcription repressor IBH1 and forms a heterodimer of antagonistic bHLH transcription factors that function downstream of BZR1 to mediate brassinosteroid regulation of cell elongation and lamina inclination. This Oryza sativa subsp. indica (Rice) protein is Transcription factor ILI1 (ILI1).